The following is a 193-amino-acid chain: Potassium-transporting ATPase KdpC subunit (193 aa).

The helical transmembrane segment at 14–34 (ITFTFLVLCGLVYPLIVTGIA) threads the bilayer.

This sequence belongs to the KdpC family. As to quaternary structure, the system is composed of three essential subunits: KdpA, KdpB and KdpC.

The protein localises to the cell membrane. Part of the high-affinity ATP-driven potassium transport (or Kdp) system, which catalyzes the hydrolysis of ATP coupled with the electrogenic transport of potassium into the cytoplasm. This subunit acts as a catalytic chaperone that increases the ATP-binding affinity of the ATP-hydrolyzing subunit KdpB by the formation of a transient KdpB/KdpC/ATP ternary complex. The protein is Potassium-transporting ATPase KdpC subunit of Bacillus cereus (strain ATCC 14579 / DSM 31 / CCUG 7414 / JCM 2152 / NBRC 15305 / NCIMB 9373 / NCTC 2599 / NRRL B-3711).